We begin with the raw amino-acid sequence, 310 residues long: Putative S-adenosyl-L-methionine-dependent methyltransferase MAB_4587c (310 aa).

S-adenosyl-L-methionine contacts are provided by residues Asp126 and Asp155–Leu156.

This sequence belongs to the UPF0677 family.

Exhibits S-adenosyl-L-methionine-dependent methyltransferase activity. In Mycobacteroides abscessus (strain ATCC 19977 / DSM 44196 / CCUG 20993 / CIP 104536 / JCM 13569 / NCTC 13031 / TMC 1543 / L948) (Mycobacterium abscessus), this protein is Putative S-adenosyl-L-methionine-dependent methyltransferase MAB_4587c.